The sequence spans 152 residues: D-aminoacyl-tRNA deacylase (152 aa).

Positions 137-138 match the Gly-cisPro motif, important for rejection of L-amino acids motif; sequence GP.

It belongs to the DTD family. In terms of assembly, homodimer.

Its subcellular location is the cytoplasm. It carries out the reaction glycyl-tRNA(Ala) + H2O = tRNA(Ala) + glycine + H(+). The enzyme catalyses a D-aminoacyl-tRNA + H2O = a tRNA + a D-alpha-amino acid + H(+). In terms of biological role, an aminoacyl-tRNA editing enzyme that deacylates mischarged D-aminoacyl-tRNAs. Also deacylates mischarged glycyl-tRNA(Ala), protecting cells against glycine mischarging by AlaRS. Acts via tRNA-based rather than protein-based catalysis; rejects L-amino acids rather than detecting D-amino acids in the active site. By recycling D-aminoacyl-tRNA to D-amino acids and free tRNA molecules, this enzyme counteracts the toxicity associated with the formation of D-aminoacyl-tRNA entities in vivo and helps enforce protein L-homochirality. The polypeptide is D-aminoacyl-tRNA deacylase (Geobacter sulfurreducens (strain ATCC 51573 / DSM 12127 / PCA)).